Reading from the N-terminus, the 560-residue chain is Putative protease Do-like 11, mitochondrial (560 aa).

The N-terminal 65 residues, 1-65 (MFFRPCVHTV…RRSSTSAAER (65 aa)), are a transit peptide targeting the mitochondrion. A serine protease region spans residues 117-302 (TEYSKSKPWK…ESRQYSCFGS (186 aa)). Active-site charge relay system residues include His-150, Asp-184, and Ser-258. The PDZ domain occupies 288–384 (ITSVQESRQY…YLVSMKKPGE (97 aa)).

Belongs to the peptidase S1C family.

The protein localises to the mitochondrion membrane. In terms of biological role, putative serine protease. This chain is Putative protease Do-like 11, mitochondrial (DEGP11), found in Arabidopsis thaliana (Mouse-ear cress).